The sequence spans 1431 residues: Stabilin-2 (1431 aa).

The Extracellular segment spans residues 1–1322 (SLPSLLTRLE…PPTAATAAHS (1322 aa)). The region spanning 2 to 130 (LPSLLTRLEQ…GVIHGLEKVL (129 aa)) is the FAS1 domain. N112 and N140 each carry an N-linked (GlcNAc...) asparagine glycan. Residues 207–272 (PQCQACPGRG…CSCVHGRCSQ (66 aa)) form the Laminin EGF-like 1 domain. 18 disulfide bridges follow: C212-C226, C220-C236, C238-C247, C259-C270, C263-C280, C282-C291, C300-C310, C304-C320, C322-C333, C339-C352, C346-C362, C364-C375, C381-C394, C388-C404, C406-C417, C423-C436, C430-C446, and C448-C459. 2 N-linked (GlcNAc...) asparagine glycosylation sites follow: N231 and N243. EGF-like domains follow at residues 296-334 (TTDNCNGTCHTSANCLLDPDGKASCKCAAGFRGNGTVCT), 335-376 (AINA…IVCL), 377-418 (EINP…KVCS), and 419-460 (LINV…IVCR). The N-linked (GlcNAc...) asparagine glycan is linked to N301. N-linked (GlcNAc...) asparagine glycosylation is present at N329. Residue N437 is glycosylated (N-linked (GlcNAc...) asparagine). FAS1 domains are found at residues 460 to 588 (RGSI…DKLL) and 604 to 745 (VLQN…DCLL). N607 carries N-linked (GlcNAc...) asparagine glycosylation. The Laminin EGF-like 2 domain occupies 822–887 (PDCQACPGGP…SCSEHGQCDE (66 aa)). Intrachain disulfides connect C827-C841, C835-C851, C853-C862, C874-C885, C879-C895, and C897-C906. N-linked (GlcNAc...) asparagine glycosylation occurs at N858. The N-linked (GlcNAc...) asparagine glycan is linked to N929. EGF-like domains are found at residues 947 to 987 (VVDF…YSCI) and 988 to 1030 (EIDP…VDCE). Cystine bridges form between C951–C964, C958–C973, C975–C986, C992–C1006, C1000–C1016, C1018–C1029, C1085–C1154, and C1109–C1130. Residues 1063-1156 (GVFHLRSPLG…SEMWDVFCYR (94 aa)) form the Link domain. N-linked (GlcNAc...) asparagine glycosylation is found at N1145, N1161, N1233, N1249, and N1258. One can recognise an FAS1 4 domain in the interval 1176–1310 (SGNLLQVLMS…GILHIISEPL (135 aa)). A helical transmembrane segment spans residues 1323–1343 (GLGTGIFCAVVLVTGAIALAA). Topologically, residues 1344–1431 (YSYFRLKQRT…QQATTVTVPR (88 aa)) are cytoplasmic. An interaction with TMSB4X region spans residues 1368 to 1378 (WLLASSSPRIS).

In terms of assembly, interacts with GULP1, heparin, alpha-M/beta-2 integrin (ITGAM and ITGB2), and thymosin beta 4 (TMSB4X). In terms of processing, glycosylated. Post-translationally, proteolytically processed to yield a 175 kDa protein. As to expression, initially expressed in all vascular cells, including those of sinusoidal-like structures, vitellin veins, and hepatic veins or sinus venosus, in E13.5 fetal liver. The expression then progressively disappears in the portal and hepatic veins, but the expression in sinusoidals endothelial cells (SECs) is retained and becomes stronger during development.

Its subcellular location is the cytoplasm. It localises to the cell membrane. Functionally, phosphatidylserine receptor that enhances the engulfment of apoptotic cells. Hyaluronan receptor that binds to and mediates endocytosis of hyaluronic acid (HA). Also acts, in different species, as a primary systemic scavenger receptor for heparin (Hep), chondroitin sulfate (CS), dermatan sulfate (DS), nonglycosaminoglycan (GAG), acetylated low-density lipoprotein (AcLDL), pro-collagen propeptides and advanced glycation end products (AGE). May serve to maintain tissue integrity by supporting extracellular matrix turnover or it may contribute to maintaining fluidity of bodily liquids by resorption of hyaluronan. Counter receptor which plays an important role in lymphocyte recruitment in the hepatic vasculature. Binds to both Gram-positive and Gram-negative bacteria and may play a role in defense against bacterial infection. The proteolytically processed 175 kDa form also functions as an endocytosis receptor for heparin internalization as well as HA and CS. In Rattus norvegicus (Rat), this protein is Stabilin-2.